A 130-amino-acid polypeptide reads, in one-letter code: Astrocytic phosphoprotein PEA-15 (130 aa).

Positions 3 to 81 constitute a DED domain; that stretch reads EYGTLLQDLT…RPDLLTMVVD (79 aa). A phosphoserine mark is found at Ser61 and Ser90. The tract at residues 98–107 is microtubule-binding; the sequence is KLTRIPSAKK. The residue at position 104 (Ser104) is a Phosphoserine; by PKC. Position 116 is a phosphoserine; by CaMK2 (Ser116). The segment at 122–129 is microtubule-binding; sequence KLAPPPKK.

In terms of assembly, binds RPS6KA3, MAPK3 and MAPK1. Interacts with CASP8 and FADD. Transient interaction with PLD1 and PLD2. In terms of processing, phosphorylated by protein kinase C and calcium-calmodulin-dependent protein kinase. These phosphorylation events are modulated by neurotransmitters or hormones. Predominantly expressed in the brain. Low levels in some peripheral organs.

It localises to the cytoplasm. Blocks Ras-mediated inhibition of integrin activation and modulates the ERK MAP kinase cascade. Inhibits RPS6KA3 activities by retaining it in the cytoplasm. Inhibits both TNFRSF6- and TNFRSF1A-mediated CASP8 activity and apoptosis. Regulates glucose transport by controlling both the content of SLC2A1 glucose transporters on the plasma membrane and the insulin-dependent trafficking of SLC2A4 from the cell interior to the surface. The polypeptide is Astrocytic phosphoprotein PEA-15 (Pea15) (Mus musculus (Mouse)).